We begin with the raw amino-acid sequence, 359 residues long: Peptide chain release factor 1 (359 aa).

N5-methylglutamine is present on glutamine 234. A disordered region spans residues 283-305; it reads SQKDAARAADRRAQVGSGDRSER.

This sequence belongs to the prokaryotic/mitochondrial release factor family. Post-translationally, methylated by PrmC. Methylation increases the termination efficiency of RF1.

The protein localises to the cytoplasm. Functionally, peptide chain release factor 1 directs the termination of translation in response to the peptide chain termination codons UAG and UAA. This chain is Peptide chain release factor 1, found in Methylobacterium nodulans (strain LMG 21967 / CNCM I-2342 / ORS 2060).